Here is a 288-residue protein sequence, read N- to C-terminus: Syntaxin-1B (288 aa).

Over residues 1–13 (MKDRTQELRSAKD) the composition is skewed to basic and acidic residues. Residues 1–20 (MKDRTQELRSAKDSDDEEEV) are disordered. The Cytoplasmic portion of the chain corresponds to 1–264 (MKDRTQELRS…KYQSKARRKK (264 aa)). 2 positions are modified to phosphoserine: serine 10 and serine 14. Positions 29-104 (MDEFFEQVEE…IEQSIEQEEG (76 aa)) form a coiled coil. The t-SNARE coiled-coil homology domain occupies 191–253 (LNEIETRHNE…ERAVSDTKKA (63 aa)). Residues 265 to 288 (IMIIICCVVLGVVLASSIGGTLGL) traverse the membrane as a helical; Anchor for type IV membrane protein segment.

Belongs to the syntaxin family. As to quaternary structure, interacts with OTOF. Interacts with SYT6 and SYT8; the interaction is Ca(2+)-dependent. Phosphorylated by CK2. In terms of processing, (Microbial infection) Targeted and hydrolyzed by C.botulinum neurotoxin type C (BoNT/C); cleavage by BoNT/C inhibits neurotransmitter release. Probably hydrolyzes the 252-Lys-|-Ala-253 bond.

It is found in the membrane. In terms of biological role, potentially involved in docking of synaptic vesicles at presynaptic active zones. May mediate Ca(2+)-regulation of exocytosis acrosomal reaction in sperm. This chain is Syntaxin-1B (STX1B), found in Bos taurus (Bovine).